The chain runs to 603 residues: Insulin-like growth factor-binding protein complex acid labile subunit (603 aa).

An N-terminal signal peptide occupies residues 1–23; that stretch reads MALRTGSPALVVLLAFWVALGPC. Residues 32–74 enclose the LRRNT domain; sequence ASADAEGPQCPVTCTCSYDDYTDELSVFCSSRNLTQLPDGIPV. 2 disulfide bridges follow: cysteine 41–cysteine 47 and cysteine 45–cysteine 60. N-linked (GlcNAc...) asparagine glycans are attached at residues asparagine 64, asparagine 85, and asparagine 96. LRR repeat units follow at residues 75–96, 99–120, 123–144, 147–168, 171–192, 195–216, 219–240, 243–264, 267–288, 291–312, 315–336, 339–360, 363–384, 387–408, 411–432, 435–456, 459–480, 483–504, and 507–528; these read STRALWLDGNNLSSIPSAAFQN, SLDFLNLQGSWLRSLEPQALLG, NLYHLHLERNLLRSLAAGLFRH, SLASLSLGNNLLGRLEEGLFRG, HLWDLNLGWNSLVVLPDTVFQG, NLHELVLAGNKLTYLQPALLCG, ELRELDLSRNALRSVKANVFIH, RLQKLYLDRNLITAVAPRAFLG, ALRWLDLSHNRVAGLLEDTFPG, GLHVLRLAHNAITSLRPRTFKD, FLEELQLGHNRIRQLGEKTFEG, QLEVLTLNDNQIHEVKVGAFFG, NVAVMNLSGNCLRSLPEHVFQG, RLHSLHLEHSCLGRIRLHTFAG, GLRRLFLRDNSISSIEEQSLAG, ELLELDLTANQLTHLPRQLFQG, QLEYLLLSNNQLTMLSEDVLGP, RAFWLDLSHNRLETPAEGLFSS, and RLRYLNLRNNSLQTFVPQPGLE. Asparagine 368 is a glycosylation site (N-linked (GlcNAc...) asparagine). Asparagine 515 is a glycosylation site (N-linked (GlcNAc...) asparagine). The LRRCT domain maps to 535–603; sequence NPWDCSCPLK…DISETLFVHC (69 aa). Intrachain disulfides connect cysteine 539/cysteine 581, cysteine 541/cysteine 603, and cysteine 565/cysteine 570. Asparagine 578 and asparagine 586 each carry an N-linked (GlcNAc...) asparagine glycan.

In terms of assembly, forms a ternary complex with IGF1 and IGFBP3.

Its subcellular location is the secreted. It is found in the extracellular space. May have an important role in regulating the access of circulating IGFs to the tissues. This chain is Insulin-like growth factor-binding protein complex acid labile subunit (Igfals), found in Mus musculus (Mouse).